A 347-amino-acid polypeptide reads, in one-letter code: NADH-ubiquinone oxidoreductase chain 2 (347 aa).

10 helical membrane-spanning segments follow: residues 4–21 (LILS…LIVM), 26–45 (WLMV…PVLM), 59–79 (YFLT…INLI), 96–116 (IIMT…FWVP), 122–142 (IQLS…MSIL), 148–168 (AINM…GGWG), 201–221 (ALLN…TFML), 242–262 (TTIL…GFLP), 274–294 (DSII…YFYM), and 326–346 (LPPL…LMLL).

Belongs to the complex I subunit 2 family. As to quaternary structure, core subunit of respiratory chain NADH dehydrogenase (Complex I) which is composed of 45 different subunits. Interacts with TMEM242.

Its subcellular location is the mitochondrion inner membrane. The enzyme catalyses a ubiquinone + NADH + 5 H(+)(in) = a ubiquinol + NAD(+) + 4 H(+)(out). Functionally, core subunit of the mitochondrial membrane respiratory chain NADH dehydrogenase (Complex I) which catalyzes electron transfer from NADH through the respiratory chain, using ubiquinone as an electron acceptor. Essential for the catalytic activity and assembly of complex I. The sequence is that of NADH-ubiquinone oxidoreductase chain 2 from Syconycteris australis (Southern blossom bat).